The chain runs to 422 residues: Tk-subtilisin (422 aa).

The first 24 residues, 1-24, serve as a signal peptide directing secretion; that stretch reads MKKSIALVLSIVLLAALFAVPASA. The propeptide occupies 25 to 106; it reads GEQNTIRVIV…SWLGGGSTQP (82 aa). The 307-residue stretch at 111-417 folds into the Peptidase S8 domain; that stretch reads PWGIERVKAP…YGVVRAALAV (307 aa). Active-site charge relay system residues include aspartate 139, histidine 177, and serine 348.

It belongs to the peptidase S8 family. Monomer. The cofactor is Ca(2+).

The protein localises to the secreted. Its function is as follows. Has a broad substrate specificity with a slight preference to large hydrophobic amino acid residues at the P1 position. This is Tk-subtilisin from Thermococcus kodakarensis (strain ATCC BAA-918 / JCM 12380 / KOD1) (Pyrococcus kodakaraensis (strain KOD1)).